We begin with the raw amino-acid sequence, 238 residues long: EKC/KEOPS complex subunit SPAP27G11.07c (238 aa).

In terms of domain architecture, Protein kinase spans 20 to 238; it reads EKKLTVVKQG…MRGRKRTMIG (219 aa). Residues 26 to 34 and Lys48 each bind ATP; that span reads VKQGAEAIT. The Proton acceptor role is filled by Asp148.

This sequence belongs to the protein kinase superfamily. BUD32 family. Component of the EKC/KEOPS complex composed of at least SPAP27G11.07c/BUD32, cgi121, gon7, pgp2 and SPAC4H3.13/PCC1; the whole complex dimerizes.

The protein localises to the cytoplasm. Its subcellular location is the nucleus. It is found in the chromosome. It localises to the telomere. The catalysed reaction is L-seryl-[protein] + ATP = O-phospho-L-seryl-[protein] + ADP + H(+). It catalyses the reaction L-threonyl-[protein] + ATP = O-phospho-L-threonyl-[protein] + ADP + H(+). Its function is as follows. Component of the EKC/KEOPS complex that is required for the formation of a threonylcarbamoyl group on adenosine at position 37 (t(6)A37) in tRNAs that read codons beginning with adenine. The complex is probably involved in the transfer of the threonylcarbamoyl moiety of threonylcarbamoyl-AMP (TC-AMP) to the N6 group of A37. BUD32 has ATPase activity in the context of the EKC/KEOPS complex and likely plays a supporting role to the catalytic subunit KAE1. The EKC/KEOPS complex also promotes both telomere uncapping and telomere elongation. The complex is required for efficient recruitment of transcriptional coactivators. The sequence is that of EKC/KEOPS complex subunit SPAP27G11.07c from Schizosaccharomyces pombe (strain 972 / ATCC 24843) (Fission yeast).